We begin with the raw amino-acid sequence, 182 residues long: ADP-ribosylation factor 3 (182 aa).

The N-myristoyl glycine moiety is linked to residue Gly-2. Residues 24 to 31 (GLDNAGKT), 67 to 71 (DLGGQ), and 126 to 129 (NKQD) each bind GTP.

Belongs to the small GTPase superfamily. Arf family. In terms of assembly, interacts with GRIP; but preferentially when bound to GTP.

The protein localises to the golgi apparatus. Functionally, GTP-binding protein involved in protein trafficking; may modulate vesicle budding and uncoating within the Golgi apparatus. This Arabidopsis thaliana (Mouse-ear cress) protein is ADP-ribosylation factor 3 (ARF3).